A 211-amino-acid polypeptide reads, in one-letter code: Pyruvate dehydrogenase E1 component subunit beta, mitochondrial (211 aa).

Position 31 is a phosphotyrosine (Y31). The K(+) site is built by I48, A96, I97, D99, and N101.

Heterotetramer of two PDHA1 and two PDHB subunits. The heterotetramer interacts with DLAT, and is part of the multimeric pyruvate dehydrogenase complex that contains multiple copies of pyruvate dehydrogenase (E1), dihydrolipoamide acetyltransferase (DLAT, E2) and lipoamide dehydrogenase (DLD, E3). These subunits are bound to an inner core composed of about 48 DLAT and 12 PDHX molecules. Interacts with DLAT. Thiamine diphosphate serves as cofactor.

Its subcellular location is the mitochondrion matrix. It catalyses the reaction N(6)-[(R)-lipoyl]-L-lysyl-[protein] + pyruvate + H(+) = N(6)-[(R)-S(8)-acetyldihydrolipoyl]-L-lysyl-[protein] + CO2. Functionally, the pyruvate dehydrogenase complex catalyzes the overall conversion of pyruvate to acetyl-CoA and CO(2), and thereby links the glycolytic pathway to the tricarboxylic cycle. This chain is Pyruvate dehydrogenase E1 component subunit beta, mitochondrial, found in Mesocricetus auratus (Golden hamster).